A 92-amino-acid polypeptide reads, in one-letter code: Small ribosomal subunit protein uS19 (92 aa).

This sequence belongs to the universal ribosomal protein uS19 family.

Its function is as follows. Protein S19 forms a complex with S13 that binds strongly to the 16S ribosomal RNA. This chain is Small ribosomal subunit protein uS19, found in Photorhabdus laumondii subsp. laumondii (strain DSM 15139 / CIP 105565 / TT01) (Photorhabdus luminescens subsp. laumondii).